Reading from the N-terminus, the 227-residue chain is Ion-translocating oxidoreductase complex subunit E (227 aa).

5 consecutive transmembrane segments (helical) span residues 34-56 (AINA…TIIS), 68-88 (IPIY…LLHA), 91-111 (FNLY…CIIV), 127-147 (FFDG…VGSI), and 181-201 (TIIL…LIAI).

Belongs to the NqrDE/RnfAE family. In terms of assembly, the complex is composed of six subunits: RnfA, RnfB, RnfC, RnfD, RnfE and RnfG.

The protein resides in the cell inner membrane. Its function is as follows. Part of a membrane-bound complex that couples electron transfer with translocation of ions across the membrane. The polypeptide is Ion-translocating oxidoreductase complex subunit E (Buchnera aphidicola subsp. Acyrthosiphon pisum (strain APS) (Acyrthosiphon pisum symbiotic bacterium)).